The sequence spans 380 residues: Glycogenin-2 (380 aa).

UDP contacts are provided by L10, Y16, and R95. Positions 10, 16, 95, 104, 120, 121, 122, 158, 159, 185, 188, and 189 each coordinate UDP-alpha-D-glucose. 3 residues coordinate UDP: D120, A121, and D122. D120 contributes to the Mn(2+) binding site. D122 serves as a coordination point for Mn(2+). 2 O-linked (Glc...) tyrosine glycosylation sites follow: Y230 and Y232. Residues H249, G252, and K255 each contribute to the UDP site. Mn(2+) is bound at residue H249. UDP-alpha-D-glucose contacts are provided by G252 and K255. The interval 331–357 is disordered; it reads SVDRNASQKSTAEKHDIEKPTSKPQSA. Residues 341 to 351 show a composition bias toward basic and acidic residues; the sequence is TAEKHDIEKPT. Residue Y367 is glycosylated (O-linked (Glc...) tyrosine).

This sequence belongs to the glycosyltransferase 8 family. Glycogenin subfamily. In terms of assembly, interacts with glycogen synthase GSY2. It depends on Mn(2+) as a cofactor.

Its subcellular location is the cytoplasm. It localises to the vacuole. It catalyses the reaction L-tyrosyl-[glycogenin] + UDP-alpha-D-glucose = alpha-D-glucosyl-L-tyrosyl-[glycogenin] + UDP + H(+). It carries out the reaction [1,4-alpha-D-glucosyl](n)-L-tyrosyl-[glycogenin] + UDP-alpha-D-glucose = [1,4-alpha-D-glucosyl](n+1)-L-tyrosyl-[glycogenin] + UDP + H(+). Functionally, self-glucosylating initiator of glycogen synthesis. It catalyzes the formation of a short alpha (1,4)-glucosyl chain covalently attached via a glucose 1-O-tyrosyl linkage to internal tyrosine residues and these chains act as primers for the elongation reaction catalyzed by glycogen synthase. Capable of transferring glucosyl residues to unbound acceptors such as free oligoglucans or oligoglucan derivatives. The chain is Glycogenin-2 (GLG2) from Saccharomyces cerevisiae (strain YJM789) (Baker's yeast).